The following is a 432-amino-acid chain: MWPQPRLPPHPAMSEKTQQGKLAAAKKKLKAYWQRKSPGIPAGANRKKKINGSSPDTFTSGGYHSPGDSATGIYGEGRASSTTLQDLESQYQELAVALDSSSAIISQLTENINSLVRTSKEEKKHEIHLVQKLGRSLFKLKNQTAEPLAPQPPAGPSKMEQLQDETNHLRKELESVGRQLQAEVENNQMLSLLNRRQEERLREQEERLREQEERLCEQEERLCEQEERLREQEERLCEQEKLPGQERLLEEVEKLLEQERRQEEQERLLERERLLDEVEELLEQERLRQQDERLWQQETLRELERLRELERMLELGWEALYEQRAEPRSGFEELNNENKSTLQLEQQVKELEKSGGAEEPRGSESAAAARPVAGAPVPQGAWMCGQAGWTPQEHPGLSGEAVGTGEAAGGAGEAACHSFRAAENRELNITII.

The span at 1 to 11 (MWPQPRLPPHP) shows a compositional bias: pro residues. 2 disordered regions span residues 1-77 (MWPQ…YGEG) and 349-411 (KELE…AGGA). Positions 51 to 62 (NGSSPDTFTSGG) are enriched in polar residues. The stretch at 157–354 (SKMEQLQDET…EQQVKELEKS (198 aa)) forms a coiled coil. The span at 349–362 (KELEKSGGAEEPRG) shows a compositional bias: basic and acidic residues. A compositionally biased stretch (low complexity) spans 366–381 (AAAARPVAGAPVPQGA).

This sequence belongs to the GOLGA6 family.

In Homo sapiens (Human), this protein is Golgin subfamily A member 6-like protein 9.